We begin with the raw amino-acid sequence, 904 residues long: Thiamine diphosphate dependent-3-acetyloctanal synthase PigD (904 aa).

The interval 879–904 (RKAWAAQQPESTSTAFDQDPTQEATS) is disordered. Positions 886 to 904 (QPESTSTAFDQDPTQEATS) are enriched in polar residues.

It belongs to the TPP enzyme family. It depends on thiamine diphosphate as a cofactor.

The enzyme catalyses (2E)-octenal + pyruvate + H(+) = (S)-3-acetyloctanal + CO2. The protein operates within antibiotic biosynthesis; prodigiosin biosynthesis. In terms of biological role, involved in the biosynthesis of 2-methyl-3-n-amyl-pyrrole (MAP), one of the terminal products involved in the biosynthesis of the red antibiotic prodigiosin (Pig). Catalyzes the decarboxylation of pyruvate, followed by the modification of the resulting two-carbon fragment acetaldehyde at the C3 position of the 2-octenal (1,2-addition of acetaldehyde) giving 3-acetyloctanal. In vitro, it can act on a number of alpha,beta-unsaturated carbonyl compounds, including aldehydes and ketones, and can catalyze both 1,2-addition and Stetter-type 1,4-addition depending on the substrate. This is Thiamine diphosphate dependent-3-acetyloctanal synthase PigD from Serratia marcescens.